The sequence spans 482 residues: Glutamate--tRNA ligase 1 (482 aa).

Residues 18–28 (PSPTGYLHLGG) carry the 'HIGH' region motif. The 'KMSKS' region motif lies at 252–256 (KLSKR). Position 255 (Lys-255) interacts with ATP.

Belongs to the class-I aminoacyl-tRNA synthetase family. Glutamate--tRNA ligase type 1 subfamily. As to quaternary structure, monomer.

The protein localises to the cytoplasm. It carries out the reaction tRNA(Glu) + L-glutamate + ATP = L-glutamyl-tRNA(Glu) + AMP + diphosphate. Its function is as follows. Catalyzes the attachment of glutamate to tRNA(Glu) in a two-step reaction: glutamate is first activated by ATP to form Glu-AMP and then transferred to the acceptor end of tRNA(Glu). The chain is Glutamate--tRNA ligase 1 from Erythrobacter litoralis (strain HTCC2594).